We begin with the raw amino-acid sequence, 299 residues long: Protein NSG2 (299 aa).

At 1 to 108 (MANRGEPDPK…PSRTRQTRQN (108 aa)) the chain is on the cytoplasmic side. Ser-90 carries the post-translational modification Phosphoserine. Residues 109-129 (ILHYLQAVLILSLSGFAYHEL) traverse the membrane as a helical segment. The Lumenal portion of the chain corresponds to 130–161 (SRNLHDNHLLHPDFASRPLLLGVKLCNWLSNG). The helical transmembrane segment at 162–182 (VLPNWLGYGVEGLLFGSVVPI) threads the bilayer. Over 183-237 (LDNIFQTEVVKSSVHHDSLTSVIRSINAMLGVTFGIRKIQWNSSLQAAGAWGLLN) the chain is Cytoplasmic. The chain crosses the membrane as a helical span at residues 238–258 (IILWLFFDGSISMLMSCICIG). Over 259–268 (VGCCISCYKD) the chain is Lumenal. The helical transmembrane segment at 269-289 (IIDGSQFLYFMDFYFLGSLMF) threads the bilayer. The Cytoplasmic segment spans residues 290-299 (GKLGRYLYSH).

This sequence belongs to the INSIG family.

It localises to the endoplasmic reticulum membrane. Its function is as follows. Stabilizes the HMG-CoA reductase HMG2 by preventing its HRD1-dependent degradation. Binds directly to the sterol-sensing domain (SSD)-containing transmembrane region of HMG2, promoting its folding to protect it from degradation. The sequence is that of Protein NSG2 (NSG2) from Saccharomyces cerevisiae (strain ATCC 204508 / S288c) (Baker's yeast).